Here is a 249-residue protein sequence, read N- to C-terminus: AA9 family lytic polysaccharide monooxygenase A (249 aa).

The first 19 residues, 1–19, serve as a signal peptide directing secretion; it reads MRGPLCFTLIAIAVTSVVA. Cu(2+) contacts are provided by histidine 20 and histidine 97. Cysteine 60 and cysteine 183 are disulfide-bonded. Histidine 163 contacts O2. Cu(2+) is bound at residue tyrosine 180.

The protein belongs to the polysaccharide monooxygenase AA9 family. It depends on Cu(2+) as a cofactor.

The protein resides in the secreted. It catalyses the reaction [(1-&gt;4)-beta-D-glucosyl]n+m + reduced acceptor + O2 = 4-dehydro-beta-D-glucosyl-[(1-&gt;4)-beta-D-glucosyl]n-1 + [(1-&gt;4)-beta-D-glucosyl]m + acceptor + H2O.. Its function is as follows. Lytic polysaccharide monooxygenase (LPMO) that depolymerizes crystalline and amorphous polysaccharides via the oxidation of scissile alpha- or beta-(1-4)-glycosidic bonds, yielding C4 oxidation products. Catalysis by LPMOs requires the reduction of the active-site copper from Cu(II) to Cu(I) by a reducing agent and H(2)O(2) or O(2) as a cosubstrate. Active on cellulose and cello-oligosaccharides, as well as plant cell wall-derived hemicellulosic polysaccharides. Also active on cello-oligosaccharides such as cellohexaose, cellopentaose or cellotetraose. This Armillaria gallica (Bulbous honey fungus) protein is AA9 family lytic polysaccharide monooxygenase A.